The chain runs to 807 residues: MRLSPAPLRLSRGPALLALALPLAAALAFSDETLDKVAKSEGYCSRILRAQGTRREGYTEFSLRVEGDPDFYKPGSSYRVTLSAAPPSYFRGFTLIALKENREGDKEEDHAGTFQIIDEEETQFMSNCPVAVTESTPRRRTRIQVFWIAPPTGTGCVILKASIVQKRIIYFQDEGSLTKKLCEQDPTLDGVTDRPILDCCACGTAKYRLTFYGNWSEKTHPKDYPRRANHWSAIIGGSHSKNYVLWEYGGYASEGVKQVAELGSPVKMEEEIRQQSDEVLTVIKAKAQWPSWQPVNVRAAPSAEFSVDRTRHLMSFLTMMGPSPDWNVGLSAEDLCTKECGWVQKVVQDLIPWDAGTDSGVTYESPNKPTIPQEKIRPLTSLDHPQSPFYDPEGGSITQVARVVIERIARKGEQCNIVPDNVDDIVADLAPEEKDEDDTPETCIYSNWSPWSACSSSTCEKGKRMRQRMLKAQLDLSVPCPDTQDFQPCMGPGCSDEDGSTCTMSEWITWSPCSVSCGMGMRSRERYVKQFPEDGSVCMLPTEETEKCTVNEECSPSSCLVTEWGEWDDCSATCGMGMKKRHRMVKMSPADGSMCKAETSQAEKCMMPECHTIPCLLSPWSEWSDCSVTCGKGMRTRQRMLKSLAELGDCNEDLEQAEKCMLPECPIDCELSEWSQWSECNKSCGKGHMIRTRTIQMEPQFGGAPCPETVQRKKCRARKCLRSPSIQKLRWREARESRRSEQLREESDGEQFPGCRMRPWTAWSECTKLCGGGIQERYMTVKKRFKSSQFTSCKDKKEIRACNVHPC.

An N-terminal signal peptide occupies residues 1–28; the sequence is MRLSPAPLRLSRGPALLALALPLAAALA. The 166-residue stretch at 29–194 folds into the Reelin domain; that stretch reads FSDETLDKVA…DPTLDGVTDR (166 aa). 17 disulfides stabilise this stretch: Cys44–Cys128, Cys156–Cys182, Cys199–Cys336, Cys200–Cys340, Cys202–Cys415, Cys443–Cys480, Cys454–Cys489, Cys459–Cys494, Cys502–Cys538, Cys513–Cys517, Cys548–Cys554, Cys559–Cys595, Cys570–Cys574, Cys605–Cys610, Cys615–Cys650, Cys626–Cys630, and Cys660–Cys665. The region spanning 195–388 is the Spondin domain; it reads PILDCCACGT…LTSLDHPQSP (194 aa). A glycan (N-linked (GlcNAc...) asparagine) is linked at Asn214. Ca(2+) contacts are provided by Asp325, Asp354, and Asp358. TSP type-1 domains lie at 442–495, 501–555, 558–611, 614–666, and 668–721; these read TCIY…PGCS, TCTM…EECS, SCLV…PECH, PCLL…PECP, and DCEL…RKCL. N-linked (GlcNAc...) asparagine glycosylation is present at Asn681. Residues 732 to 746 are compositionally biased toward basic and acidic residues; it reads REARESRRSEQLREE. The interval 732–752 is disordered; that stretch reads REARESRRSEQLREESDGEQF. A TSP type-1 6 domain is found at 754–806; it reads GCRMRPWTAWSECTKLCGGGIQERYMTVKKRFKSSQFTSCKDKKEIRACNVHP.

As to quaternary structure, binds to the central extracellular domain of APP and inhibits beta-secretase cleavage of APP. Expressed at high levels in the floor plate.

The protein resides in the secreted. It localises to the extracellular space. It is found in the extracellular matrix. Cell adhesion protein that promotes the attachment of spinal cord and sensory neuron cells and the outgrowth of neurites in vitro. May contribute to the growth and guidance of axons in both the spinal cord and the PNS. The polypeptide is Spondin-1 (Spon1) (Rattus norvegicus (Rat)).